Here is a 388-residue protein sequence, read N- to C-terminus: Acetate kinase (388 aa).

Position 14 (Asn-14) interacts with Mg(2+). Lys-21 is an ATP binding site. Arg-80 lines the substrate pocket. Catalysis depends on Asp-137, which acts as the Proton donor/acceptor. ATP-binding positions include 197-201 (HLGNG), 271-273 (DFR), and 319-323 (GIGEH). Mg(2+) is bound at residue Glu-373.

Belongs to the acetokinase family. Homodimer. It depends on Mg(2+) as a cofactor. The cofactor is Mn(2+).

It localises to the cytoplasm. It catalyses the reaction acetate + ATP = acetyl phosphate + ADP. It functions in the pathway metabolic intermediate biosynthesis; acetyl-CoA biosynthesis; acetyl-CoA from acetate: step 1/2. Its function is as follows. Catalyzes the formation of acetyl phosphate from acetate and ATP. Can also catalyze the reverse reaction. The sequence is that of Acetate kinase from Mycobacterium marinum (strain ATCC BAA-535 / M).